Here is a 242-residue protein sequence, read N- to C-terminus: Aliphatic sulfonates import ATP-binding protein SsuB 1 (242 aa).

The region spanning 11-227 (VAVRRLSRAF…RPSHPDFEDL (217 aa)) is the ABC transporter domain. 43–50 (GESGSGKT) serves as a coordination point for ATP.

Belongs to the ABC transporter superfamily. Aliphatic sulfonates importer (TC 3.A.1.17.2) family. As to quaternary structure, the complex is composed of two ATP-binding proteins (SsuB), two transmembrane proteins (SsuC) and a solute-binding protein (SsuA).

The protein resides in the cell inner membrane. The catalysed reaction is ATP + H2O + aliphatic sulfonate-[sulfonate-binding protein]Side 1 = ADP + phosphate + aliphatic sulfonateSide 2 + [sulfonate-binding protein]Side 1.. Part of the ABC transporter complex SsuABC involved in aliphatic sulfonates import. Responsible for energy coupling to the transport system. The sequence is that of Aliphatic sulfonates import ATP-binding protein SsuB 1 from Paracoccus denitrificans (strain Pd 1222).